The following is a 400-amino-acid chain: Tryptophan--tRNA ligase, cytoplasmic (400 aa).

The 'HIGH' region motif lies at 95 to 104 (PSSGSLHFGH). A 'KMSKS' region motif is present at residues 281–285 (KMSAS).

This sequence belongs to the class-I aminoacyl-tRNA synthetase family.

The protein resides in the cytoplasm. The catalysed reaction is tRNA(Trp) + L-tryptophan + ATP = L-tryptophyl-tRNA(Trp) + AMP + diphosphate + H(+). In Dictyostelium discoideum (Social amoeba), this protein is Tryptophan--tRNA ligase, cytoplasmic (trpS).